The primary structure comprises 829 residues: Leucine--tRNA ligase (829 aa).

The 'HIGH' region signature appears at 34 to 44; the sequence is PYPSGNIHMGH. A 'KMSKS' region motif is present at residues 591–595; sequence KMSKS. Position 594 (Lys594) interacts with ATP.

It belongs to the class-I aminoacyl-tRNA synthetase family.

It is found in the cytoplasm. The catalysed reaction is tRNA(Leu) + L-leucine + ATP = L-leucyl-tRNA(Leu) + AMP + diphosphate. The protein is Leucine--tRNA ligase of Ehrlichia canis (strain Jake).